We begin with the raw amino-acid sequence, 798 residues long: MIKKILTTCFGLVFGFCVFGVGLVAIAILVTYPKLPSLDSLQHYQPKMPLTIYSADGEVIGMYGEQRREFTKIGDFPEVLRNAVIAAEDKRFYRHWGVDVWGVARAAVGNVVSGSVQSGASTITQQVAKNFYLSSEKTFTRKFNEVLLAYKIEQSLSKDKILELYFNQIYLGQRAYGFASAAQIYFNKNVRDLTLAEAAMLAGLPKAPSAYNPIVNPERAKLRQKYILNNMLEEKMITVQQRDQALNEELHYERFVRKIDQSALYVAEMVRQELYEKYGEDAYTQGFKVYTTVRADHQKVATEALRKALRNFDRGSSYRGAENYIDLSKSEDVEETVSQYLSGLYTVDKMVPAVVLDVTKKKNVVIQLPGGRRVTLDRRALGFAARAVNNEKMGEDRIRRGAVIRVKNNGGRWAVVQEPLLQGALVSLDAKTGAVRALVGGYDFHSKTFNRAVQAMRQPGSTFKPFVYSAALSKGMTASTVVNDAPISLPGKGPNGSVWTPKNSDGRYSGYITLRQALTASKNMVSIRILMSIGVGYAQQYIRRFGFRSSELPASLSMALGTGETTPLKVAEAYSVFANGGYRVSSHVIDKIYDRDGRLRAQMQPLVAGQNAPQAIDPRNAYIMYKIMQDVVRVGTARGAAALGRTDIAGKTGTTNDNKDAWFVGFNPDVVTAVYIGFDKPKSMGRVGYGGTIAVPVWVDYMRFALKGKQGKGMKMPEGVVSSNGEYYMKERMVTDPGLTLDNSGIAPQPSRRAKEDDGGAAEGGRQAADDEVRQDMQETPVLPSNTGSKQQQLDSLF.

The Cytoplasmic portion of the chain corresponds to 1–9 (MIKKILTTC). Residues 10–30 (FGLVFGFCVFGVGLVAIAILV) form a helical; Signal-anchor for type II membrane protein membrane-spanning segment. Residues 31–798 (TYPKLPSLDS…SKQQQLDSLF (768 aa)) lie on the Periplasmic side of the membrane. The transglycosylase stretch occupies residues 50-218 (LTIYSADGEV…SAYNPIVNPE (169 aa)). The active-site Proton donor; for transglycosylase activity is Glu88. The interval 378–700 (RRALGFAARA…GTIAVPVWVD (323 aa)) is transpeptidase. The active-site Acyl-ester intermediate; for transpeptidase activity is the Ser461. The tract at residues 738–798 (GLTLDNSGIA…SKQQQLDSLF (61 aa)) is disordered. Basic and acidic residues predominate over residues 768 to 777 (AADDEVRQDM). Residues 783-798 (LPSNTGSKQQQLDSLF) show a composition bias toward polar residues.

The protein in the N-terminal section; belongs to the glycosyltransferase 51 family. It in the C-terminal section; belongs to the transpeptidase family.

It is found in the cell inner membrane. The enzyme catalyses [GlcNAc-(1-&gt;4)-Mur2Ac(oyl-L-Ala-gamma-D-Glu-L-Lys-D-Ala-D-Ala)](n)-di-trans,octa-cis-undecaprenyl diphosphate + beta-D-GlcNAc-(1-&gt;4)-Mur2Ac(oyl-L-Ala-gamma-D-Glu-L-Lys-D-Ala-D-Ala)-di-trans,octa-cis-undecaprenyl diphosphate = [GlcNAc-(1-&gt;4)-Mur2Ac(oyl-L-Ala-gamma-D-Glu-L-Lys-D-Ala-D-Ala)](n+1)-di-trans,octa-cis-undecaprenyl diphosphate + di-trans,octa-cis-undecaprenyl diphosphate + H(+). It catalyses the reaction Preferential cleavage: (Ac)2-L-Lys-D-Ala-|-D-Ala. Also transpeptidation of peptidyl-alanyl moieties that are N-acyl substituents of D-alanine.. Its pathway is cell wall biogenesis; peptidoglycan biosynthesis. In terms of biological role, cell wall formation. Synthesis of cross-linked peptidoglycan from the lipid intermediates. The enzyme has a penicillin-insensitive transglycosylase N-terminal domain (formation of linear glycan strands) and a penicillin-sensitive transpeptidase C-terminal domain (cross-linking of the peptide subunits). The sequence is that of Penicillin-binding protein 1A (mrcA) from Neisseria meningitidis serogroup A / serotype 4A (strain DSM 15465 / Z2491).